Consider the following 712-residue polypeptide: U11/U12 small nuclear ribonucleoprotein 48 kDa protein (712 aa).

The CHHC U11-48K-type zinc finger occupies 98-125 (FVRCPFDSNHFMPPEALFLHSLRCPNTL). Zn(2+) contacts are provided by cysteine 101, histidine 107, histidine 117, and cysteine 121. Positions 562–712 (QSRSPIGNDQ…EDRYIPTEKE (151 aa)) are disordered. 5 stretches are compositionally biased toward basic and acidic residues: residues 585-595 (KQWKGENRADI), 603-614 (QNSDKVKRHDEY), 629-663 (KHSD…HSIE), 672-693 (SSRE…DRRS), and 702-712 (FEDRYIPTEKE).

As to quaternary structure, component of the U11/U12 snRNPs that are part of the U12-type spliceosome. Not found in the major spliceosome.

It localises to the nucleus. Functionally, likely involved in U12-type 5' splice site recognition. In Arabidopsis thaliana (Mouse-ear cress), this protein is U11/U12 small nuclear ribonucleoprotein 48 kDa protein (SNRNP48).